The primary structure comprises 386 residues: Probable serine/threonine-protein kinase PBL23 (386 aa).

A lipid anchor (S-palmitoyl cysteine) is attached at Cys-5. The Protein kinase domain maps to 82–360 (FNPDNQLGEG…SDVVTALEYL (279 aa)). ATP-binding positions include 88-96 (LGEGGFGRV) and Lys-111. Asp-210 functions as the Proton acceptor in the catalytic mechanism. Residues 365 to 386 (TEEDGQTVEGEEEEEEDERSKL) form a disordered region. Residues 368–386 (DGQTVEGEEEEEEDERSKL) are compositionally biased toward acidic residues.

It belongs to the protein kinase superfamily. Ser/Thr protein kinase family.

The protein localises to the cell membrane. It carries out the reaction L-seryl-[protein] + ATP = O-phospho-L-seryl-[protein] + ADP + H(+). It catalyses the reaction L-threonyl-[protein] + ATP = O-phospho-L-threonyl-[protein] + ADP + H(+). In terms of biological role, may be involved in plant defense signaling. This chain is Probable serine/threonine-protein kinase PBL23, found in Arabidopsis thaliana (Mouse-ear cress).